A 120-amino-acid chain; its full sequence is Superoxide dismutase [Cu-Zn] (120 aa).

The Cu cation site is built by His-11, His-13, and His-28. Positions 16–52 (GDTTNGCMSTGPHFNPTGKEHGAPQDENRHAGDLGNI) are disordered. Cys-22 and Cys-112 form a disulfide bridge. Positions 28, 36, 45, and 48 each coordinate Zn(2+). The segment covering 33 to 47 (GKEHGAPQDENRHAG) has biased composition (basic and acidic residues). Residue His-85 participates in Cu cation binding.

The protein belongs to the Cu-Zn superoxide dismutase family. Homodimer. Cu cation serves as cofactor. Requires Zn(2+) as cofactor.

Its subcellular location is the cytoplasm. The enzyme catalyses 2 superoxide + 2 H(+) = H2O2 + O2. Destroys radicals which are normally produced within the cells and which are toxic to biological systems. In Aspergillus japonicus, this protein is Superoxide dismutase [Cu-Zn] (sodC).